A 202-amino-acid polypeptide reads, in one-letter code: MRFTVKQIVWLKVLLHLAGFLPLVWLFWAGHQGYFSADPAKDIQHFTGRMALKFLLATLLVSPLARYAKQPLLIRVRRLLGLWCFAWATLHLTSYTLLELGINNLALLGSEIITRPYLTLGMISWAILLALAVTSTQAMQRKLGRRWQLLHNFVYLVAILAPIHYLWSVKIVSPQPVVYALLAAGLLTWRYKKFRQWWRAIR.

Helical transmembrane passes span 8–28, 82–102, 116–136, 149–169, and 171–191; these read IVWL…WLFW, LWCF…ELGI, PYLT…VTST, LLHN…LWSV, and IVSP…TWRY.

The protein belongs to the MsrQ family. As to quaternary structure, heterodimer of a catalytic subunit (MsrP) and a heme-binding subunit (MsrQ). It depends on FMN as a cofactor. Heme b is required as a cofactor.

The protein localises to the cell inner membrane. Its function is as follows. Part of the MsrPQ system that repairs oxidized periplasmic proteins containing methionine sulfoxide residues (Met-O), using respiratory chain electrons. Thus protects these proteins from oxidative-stress damage caused by reactive species of oxygen and chlorine generated by the host defense mechanisms. MsrPQ is essential for the maintenance of envelope integrity under bleach stress, rescuing a wide series of structurally unrelated periplasmic proteins from methionine oxidation. MsrQ provides electrons for reduction to the reductase catalytic subunit MsrP, using the quinone pool of the respiratory chain. The polypeptide is Protein-methionine-sulfoxide reductase heme-binding subunit MsrQ (Klebsiella pneumoniae subsp. pneumoniae (strain ATCC 700721 / MGH 78578)).